Reading from the N-terminus, the 253-residue chain is Shikimate dehydrogenase (253 aa).

Lys63 serves as the catalytic Proton acceptor. 115–119 (GAGGA) is a binding site for NADP(+).

Belongs to the shikimate dehydrogenase family.

It carries out the reaction shikimate + NADP(+) = 3-dehydroshikimate + NADPH + H(+). Its pathway is metabolic intermediate biosynthesis; chorismate biosynthesis; chorismate from D-erythrose 4-phosphate and phosphoenolpyruvate: step 4/7. The sequence is that of Shikimate dehydrogenase (aroE) from Thermotoga neapolitana (strain ATCC 49049 / DSM 4359 / NBRC 107923 / NS-E).